Consider the following 488-residue polypeptide: Nitrogen metabolite repression protein nmr (488 aa).

The segment at 1-45 is disordered; the sequence is MPAEILSELPLRPAPRDIKIPNAMHNEERRHKHSRSSYSEMSPLM. The span at 14–29 shows a compositional bias: basic and acidic residues; it reads APRDIKIPNAMHNEER. Polar residues predominate over residues 36-45; it reads SSYSEMSPLM. NADP(+) is bound by residues 71–76, N165, K215, and 237–240; these read NAAGRQ and YNNN. NAD(+) contacts are provided by residues 75–76, 165–167, K215, and 237–240; these read RQ, NTT, and YNNN. A dispensable for NMR function region spans residues 412-488; the sequence is EEYDGGGGNN…NKRADEEWLA (77 aa). The segment at 422–488 is disordered; it reads IGNNHNNHHQ…NKRADEEWLA (67 aa). Residues 438–459 show a composition bias toward low complexity; that stretch reads HQNGHQNGHNGINGHIVNGGVD. Over residues 460–473 the composition is skewed to acidic residues; that stretch reads SESEEEDSDSDDEG.

It belongs to the NmrA-type oxidoreductase family. In terms of assembly, interacts with nit-2.

It is found in the nucleus. Its function is as follows. May be a redox sensor protein. Negative transcriptional regulator involved in the post-transcriptional modulation of the GATA-type transcription factor nit-2, forming part of a system controlling nitrogen metabolite repression. In Neurospora crassa (strain ATCC 24698 / 74-OR23-1A / CBS 708.71 / DSM 1257 / FGSC 987), this protein is Nitrogen metabolite repression protein nmr (nmr).